The chain runs to 1412 residues: ABC transporter C family member 3 (1412 aa).

Residues 1–34 (MELEEVGVEANQPNNDQGSKKQNKNKDKKVKKEK) are disordered. The segment covering 21-34 (KQNKNKDKKVKKEK) has biased composition (basic residues). A run of 6 helical transmembrane segments spans residues 115–135 (FGLY…SQFV), 161–181 (MGYY…VCLY), 236–256 (VFQL…CLAL), 261–281 (IGWP…FNGI), 346–366 (AMLI…VFSS), and 379–399 (IFAA…LPII). Residues 119-405 (FVLSWFFYAI…LPIIVALGIQ (287 aa)) enclose the ABC transmembrane type-1 1 domain. The region spanning 439–662 (IRDATLTWNQ…QKEFSGLLQA (224 aa)) is the ABC transporter 1 domain. 474–481 (GSVGSGKS) is an ATP binding site. Helical transmembrane passes span 724-744 (WKYI…FFLM), 787-807 (IYIG…FLFF), 854-874 (NLMA…VATL), 875-895 (IIIS…CIIF), and 967-987 (WLGL…CLFI). The 291-residue stretch at 735–1025 (FLMAFIFFLM…ATLQAADTET (291 aa)) folds into the ABC transmembrane type-1 2 domain. Residues 1062-1296 (ITFDNLVMRY…PAGLLNWLVE (235 aa)) enclose the ABC transporter 2 domain. Residue 1096 to 1103 (GRTGAGKS) participates in ATP binding. The segment at 1316–1412 (GVNIDQITPP…DNDNSEAGDN (97 aa)) is disordered. Residues 1342-1351 (NINSPPQQSL) show a composition bias toward polar residues. The span at 1367-1397 (DNNNNNNNNNNNNNNNNNNNNNNNNNNNNND) shows a compositional bias: low complexity. The span at 1398 to 1412 (NDNDNDNDNSEAGDN) shows a compositional bias: acidic residues.

The protein belongs to the ABC transporter superfamily. ABCC family. Conjugate transporter (TC 3.A.1.208) subfamily.

The protein localises to the membrane. This chain is ABC transporter C family member 3 (abcC3), found in Dictyostelium discoideum (Social amoeba).